The following is a 575-amino-acid chain: Thiol:disulfide interchange protein DsbD (575 aa).

The first 24 residues, 1–24 (MIKRTLMLFLLLCSPLLTPAAANA), serve as a signal peptide directing secretion. Intrachain disulfides connect Cys-126–Cys-132 and Cys-192–Cys-314. A run of 8 helical transmembrane segments spans residues 180–200 (AILI…YPLI), 216–236 (IFWL…LLGL), 253–273 (YVLI…FGLY), 297–317 (LFGV…CTTA), 336–356 (GLTL…VTLF), 367–387 (WMQY…VFLL), 394–414 (AWGI…GFVL), and 425–445 (VIQL…QDWF). Positions 444 to 575 (WFWGTTVTQQ…FNEHLQHLPK (132 aa)) constitute a Thioredoxin domain. Cys-490 and Cys-493 form a disulfide bridge.

The protein belongs to the thioredoxin family. DsbD subfamily.

The protein resides in the cell inner membrane. The enzyme catalyses [protein]-dithiol + NAD(+) = [protein]-disulfide + NADH + H(+). It catalyses the reaction [protein]-dithiol + NADP(+) = [protein]-disulfide + NADPH + H(+). Its function is as follows. Required to facilitate the formation of correct disulfide bonds in some periplasmic proteins and for the assembly of the periplasmic c-type cytochromes. Acts by transferring electrons from cytoplasmic thioredoxin to the periplasm. This transfer involves a cascade of disulfide bond formation and reduction steps. The chain is Thiol:disulfide interchange protein DsbD from Photorhabdus laumondii subsp. laumondii (strain DSM 15139 / CIP 105565 / TT01) (Photorhabdus luminescens subsp. laumondii).